Here is a 545-residue protein sequence, read N- to C-terminus: SLAIN motif-containing protein 1 (545 aa).

A coiled-coil region spans residues 14 to 53 (TTNGLVANAELEVKKLQELVRKLEKQNEQLRNRASAVSNC). Low complexity-rich tracts occupy residues 268–286 (TTSTCSSVSRPRSSFSLYS) and 466–481 (IPSSTSLQSLSSSGIP). 2 disordered regions span residues 268–342 (TTST…IRDC) and 461–526 (QGGS…LQPP). A compositionally biased stretch (polar residues) spans 503–522 (STANGSSIPRSKIAQPQRSF).

Belongs to the SLAIN motif-containing family.

It is found in the cytoplasm. It localises to the cytoskeleton. Its function is as follows. Microtubule plus-end tracking protein that might be involved in the regulation of cytoplasmic microtubule dynamics, microtubule organization and microtubule elongation. In Xenopus tropicalis (Western clawed frog), this protein is SLAIN motif-containing protein 1 (slain1).